The primary structure comprises 495 residues: Bifunctional protein GlmU (495 aa).

The segment at 1–241 is pyrophosphorylase; sequence MPQQTAVVVL…AAKVTGVNDR (241 aa). UDP-N-acetyl-alpha-D-glucosamine is bound by residues 10–13, K24, Q81, and 86–87; these read LAAG and GT. Residue D112 participates in Mg(2+) binding. UDP-N-acetyl-alpha-D-glucosamine contacts are provided by G151, E166, N181, and N239. N239 contacts Mg(2+). The tract at residues 242–262 is linker; that stretch reads VQLSIATRTMNRYILERHMRA. The segment at 263-495 is N-acetyltransferase; the sequence is GVTIIDPAST…QATEQKDGEQ (233 aa). UDP-N-acetyl-alpha-D-glucosamine contacts are provided by R344 and K362. Catalysis depends on H374, which acts as the Proton acceptor. Positions 377 and 388 each coordinate UDP-N-acetyl-alpha-D-glucosamine. Residues A391, 397–398, S416, and A434 contribute to the acetyl-CoA site; that span reads NY. Residues 467–495 are disordered; sequence GTAAATAAAQALAADEKSSQATEQKDGEQ. Residues 468-479 are compositionally biased toward low complexity; the sequence is TAAATAAAQALA. Positions 480–495 are enriched in basic and acidic residues; it reads ADEKSSQATEQKDGEQ.

In the N-terminal section; belongs to the N-acetylglucosamine-1-phosphate uridyltransferase family. It in the C-terminal section; belongs to the transferase hexapeptide repeat family. In terms of assembly, homotrimer. Mg(2+) serves as cofactor.

It localises to the cytoplasm. The enzyme catalyses alpha-D-glucosamine 1-phosphate + acetyl-CoA = N-acetyl-alpha-D-glucosamine 1-phosphate + CoA + H(+). The catalysed reaction is N-acetyl-alpha-D-glucosamine 1-phosphate + UTP + H(+) = UDP-N-acetyl-alpha-D-glucosamine + diphosphate. It functions in the pathway nucleotide-sugar biosynthesis; UDP-N-acetyl-alpha-D-glucosamine biosynthesis; N-acetyl-alpha-D-glucosamine 1-phosphate from alpha-D-glucosamine 6-phosphate (route II): step 2/2. It participates in nucleotide-sugar biosynthesis; UDP-N-acetyl-alpha-D-glucosamine biosynthesis; UDP-N-acetyl-alpha-D-glucosamine from N-acetyl-alpha-D-glucosamine 1-phosphate: step 1/1. The protein operates within bacterial outer membrane biogenesis; LPS lipid A biosynthesis. Functionally, catalyzes the last two sequential reactions in the de novo biosynthetic pathway for UDP-N-acetylglucosamine (UDP-GlcNAc). The C-terminal domain catalyzes the transfer of acetyl group from acetyl coenzyme A to glucosamine-1-phosphate (GlcN-1-P) to produce N-acetylglucosamine-1-phosphate (GlcNAc-1-P), which is converted into UDP-GlcNAc by the transfer of uridine 5-monophosphate (from uridine 5-triphosphate), a reaction catalyzed by the N-terminal domain. In Nocardia farcinica (strain IFM 10152), this protein is Bifunctional protein GlmU.